The chain runs to 236 residues: Leucyl/phenylalanyl-tRNA--protein transferase (236 aa).

Belongs to the L/F-transferase family.

The protein localises to the cytoplasm. The enzyme catalyses N-terminal L-lysyl-[protein] + L-leucyl-tRNA(Leu) = N-terminal L-leucyl-L-lysyl-[protein] + tRNA(Leu) + H(+). It carries out the reaction N-terminal L-arginyl-[protein] + L-leucyl-tRNA(Leu) = N-terminal L-leucyl-L-arginyl-[protein] + tRNA(Leu) + H(+). It catalyses the reaction L-phenylalanyl-tRNA(Phe) + an N-terminal L-alpha-aminoacyl-[protein] = an N-terminal L-phenylalanyl-L-alpha-aminoacyl-[protein] + tRNA(Phe). Its function is as follows. Functions in the N-end rule pathway of protein degradation where it conjugates Leu, Phe and, less efficiently, Met from aminoacyl-tRNAs to the N-termini of proteins containing an N-terminal arginine or lysine. The chain is Leucyl/phenylalanyl-tRNA--protein transferase from Shewanella sp. (strain ANA-3).